The following is a 316-amino-acid chain: Melanocyte-stimulating hormone receptor (316 aa).

Over 1–37 the chain is Extracellular; that stretch reads MAVQGSQRRLLGSLNSTPTAIPQLGLAANQTGARCLE. A glycan (N-linked (GlcNAc...) asparagine) is linked at N29. The chain crosses the membrane as a helical span at residues 38 to 63; that stretch reads VSIPDGLFLSLGLVSLVENVLVVATI. The Cytoplasmic segment spans residues 64-72; it reads AKNRNLHSP. A helical membrane pass occupies residues 73 to 93; the sequence is MYCFICCLALSDLLVSGSNVV. The Extracellular segment spans residues 94–117; that stretch reads DTLLLLLEAGALAARAAVLQQLDN. A helical membrane pass occupies residues 118–139; it reads VIDVITCSSMLSSLCFLGAIAV. Residues 140–162 are Cytoplasmic-facing; that stretch reads DRYISIFYALRYRSIVTLPRARR. Residues 163 to 182 form a helical membrane-spanning segment; it reads AVAAIWVASVLFSTLFIAYY. At 183 to 190 the chain is on the extracellular side; sequence DHTAVLLC. A helical transmembrane segment spans residues 191-210; that stretch reads LVVFFLAMLVLMAVLYVHML. The Cytoplasmic portion of the chain corresponds to 211–239; it reads ARACQHAQGIARLHKRQRPVHKGFGLKGP. The helical transmembrane segment at 240–265 threads the bilayer; it reads VTLTILLGIFFLCWGPFFLHLTLIVL. The Extracellular segment spans residues 266-278; that stretch reads CPEHPTCGCIFKN. The chain crosses the membrane as a helical span at residues 279–299; the sequence is FNLFLALIICNAIIDPLIYAF. The Cytoplasmic segment spans residues 300 to 316; sequence HSQELRRTLKEVLTCSW. C314 is lipidated: S-palmitoyl cysteine.

Belongs to the G-protein coupled receptor 1 family. Interacts with MGRN1, but does not undergo MGRN1-mediated ubiquitination; this interaction competes with GNAS-binding and thus inhibits agonist-induced cAMP production. Interacts with OPN3; the interaction results in a decrease in MC1R-mediated cAMP signaling and ultimately a decrease in melanin production in melanocytes.

It is found in the cell membrane. Receptor for MSH (alpha, beta and gamma) and ACTH. The activity of this receptor is mediated by G proteins which activate adenylate cyclase. Mediates melanogenesis, the production of eumelanin (black/brown) and phaeomelanin (red/yellow), via regulation of cAMP signaling in melanocytes. This Gorilla gorilla gorilla (Western lowland gorilla) protein is Melanocyte-stimulating hormone receptor (MC1R).